The chain runs to 537 residues: MATIAGSRAPTEVPSHPYTCNTCQVAFRNSELQRGHMRSDWHRYNLKRRVASLPPISSEVFTEKVLQARAATTAQADKAGFEKTCEVCQKTYYSENSFRNHLSSTKHKSKAAAAARRPANNKVDDDVSSMSFSLGEPARADSVVDSEAEEEFSEVVEGIKNASIHDTASPIKRPSAPQPAVEEQSKTDAQMEETPTTTPKPEALTPSATTCVFCNYESPTPQLNASHMERIHGMFIPEKQYLVDLEGLLKHLWEKVFRYNECLTCGKMKVNVFAIQTHMRDKSHYHIPYTTEEEQLEIGEFYDFRSTYSDGDWETEEEDKGEEDGGVRLGAKRESKVVDENGDEVMEDEEGWETDSDASSLDTDDLHAVPAEGHYHQYERLGKHPHHSRENKKAHREADGIHAPSKRTHAVYYDEYELHLPSGKSVGHRSLARYYRQNLYHYPTPEERAERLAIEAAERENRMDVDGEEPERGRTRTRALVPRDIKGLGVTTMSDPRVRGIVQKGKKEEWKNRDSKWWMHSQVAIKEKAKHPSTYLR.

C2H2-type zinc fingers lie at residues 18-42 (YTCNTCQVAFRNSELQRGHMRSDWH) and 83-107 (KTCEVCQKTYYSENSFRNHLSSTKH). 2 disordered regions span residues 101–151 (HLSS…AEEE) and 163–204 (SIHD…PEAL). The span at 192–204 (EETPTTTPKPEAL) shows a compositional bias: low complexity. A C2H2-type 3 zinc finger spans residues 260–284 (NECLTCGKMKVNVFAIQTHMRDKSH). A compositionally biased stretch (acidic residues) spans 312 to 322 (DWETEEEDKGE). Disordered regions lie at residues 312–361 (DWET…ASSL) and 382–401 (GKHPHHSRENKKAHREADGI). A compositionally biased stretch (basic and acidic residues) spans 323-339 (EDGGVRLGAKRESKVVD). Residues 340 to 356 (ENGDEVMEDEEGWETDS) are compositionally biased toward acidic residues. Basic residues predominate over residues 383–395 (KHPHHSRENKKAH).

It belongs to the REI1 family. Associates with nascent pre-60S particles that have not yet entered the translating pool, and is released from mature 60S subunits.

Its subcellular location is the cytoplasm. In terms of biological role, pre-60S-associated factor involved in the cytoplasmic maturation of the 60S subunit. Involved in the dissociation and recycling of other late pre-60S factors before newly synthesized large ribosomal subunits enter translation. In Chaetomium thermophilum (strain DSM 1495 / CBS 144.50 / IMI 039719) (Thermochaetoides thermophila), this protein is Cytoplasmic 60S subunit biogenesis factor REI1 homolog.